The chain runs to 404 residues: ATP phosphoribosyltransferase regulatory subunit (404 aa).

It belongs to the class-II aminoacyl-tRNA synthetase family. HisZ subfamily. In terms of assembly, heteromultimer composed of HisG and HisZ subunits.

It is found in the cytoplasm. It functions in the pathway amino-acid biosynthesis; L-histidine biosynthesis; L-histidine from 5-phospho-alpha-D-ribose 1-diphosphate: step 1/9. Required for the first step of histidine biosynthesis. May allow the feedback regulation of ATP phosphoribosyltransferase activity by histidine. This chain is ATP phosphoribosyltransferase regulatory subunit, found in Trichormus variabilis (strain ATCC 29413 / PCC 7937) (Anabaena variabilis).